We begin with the raw amino-acid sequence, 124 residues long: Small ribosomal subunit protein uS12 (124 aa).

The segment at Met-1–Leu-24 is disordered. A 3-methylthioaspartic acid modification is found at Asp-89.

The protein belongs to the universal ribosomal protein uS12 family. As to quaternary structure, part of the 30S ribosomal subunit. Contacts proteins S8 and S17. May interact with IF1 in the 30S initiation complex.

Functionally, with S4 and S5 plays an important role in translational accuracy. Its function is as follows. Interacts with and stabilizes bases of the 16S rRNA that are involved in tRNA selection in the A site and with the mRNA backbone. Located at the interface of the 30S and 50S subunits, it traverses the body of the 30S subunit contacting proteins on the other side and probably holding the rRNA structure together. The combined cluster of proteins S8, S12 and S17 appears to hold together the shoulder and platform of the 30S subunit. The protein is Small ribosomal subunit protein uS12 of Desulfotalea psychrophila (strain LSv54 / DSM 12343).